The primary structure comprises 283 residues: 2-dehydro-3-deoxyphosphooctonate aldolase (283 aa).

It belongs to the KdsA family.

The protein localises to the cytoplasm. It catalyses the reaction D-arabinose 5-phosphate + phosphoenolpyruvate + H2O = 3-deoxy-alpha-D-manno-2-octulosonate-8-phosphate + phosphate. It functions in the pathway carbohydrate biosynthesis; 3-deoxy-D-manno-octulosonate biosynthesis; 3-deoxy-D-manno-octulosonate from D-ribulose 5-phosphate: step 2/3. The protein operates within bacterial outer membrane biogenesis; lipopolysaccharide biosynthesis. The polypeptide is 2-dehydro-3-deoxyphosphooctonate aldolase (Prochlorococcus marinus (strain MIT 9313)).